The sequence spans 426 residues: Putative glutamate--cysteine ligase 2 (426 aa).

It belongs to the glutamate--cysteine ligase type 2 family. YbdK subfamily.

It carries out the reaction L-cysteine + L-glutamate + ATP = gamma-L-glutamyl-L-cysteine + ADP + phosphate + H(+). ATP-dependent carboxylate-amine ligase which exhibits weak glutamate--cysteine ligase activity. The sequence is that of Putative glutamate--cysteine ligase 2 from Bradyrhizobium diazoefficiens (strain JCM 10833 / BCRC 13528 / IAM 13628 / NBRC 14792 / USDA 110).